The following is a 354-amino-acid chain: Chorismate synthase (354 aa).

Arg-46 provides a ligand contact to NADP(+). FMN contacts are provided by residues 123–125 (RVS), 233–234 (NG), Gly-273, 288–292 (KPTPS), and Arg-314.

Belongs to the chorismate synthase family. Homotetramer. FMNH2 is required as a cofactor.

The catalysed reaction is 5-O-(1-carboxyvinyl)-3-phosphoshikimate = chorismate + phosphate. It participates in metabolic intermediate biosynthesis; chorismate biosynthesis; chorismate from D-erythrose 4-phosphate and phosphoenolpyruvate: step 7/7. Catalyzes the anti-1,4-elimination of the C-3 phosphate and the C-6 proR hydrogen from 5-enolpyruvylshikimate-3-phosphate (EPSP) to yield chorismate, which is the branch point compound that serves as the starting substrate for the three terminal pathways of aromatic amino acid biosynthesis. This reaction introduces a second double bond into the aromatic ring system. This is Chorismate synthase from Campylobacter curvus (strain 525.92).